The primary structure comprises 87 residues: U3-theraphotoxin-Hhn1a 3 (87 aa).

Positions 1-24 (MVNMKASMFLTFAGLVLLFVVCYA) are cleaved as a signal peptide. A propeptide spanning residues 25 to 52 (PESEEKEFPKEMLSSIFAVDNDFKQEER) is cleaved from the precursor. Disulfide bonds link C54–C67, C61–C72, and C66–C79.

It belongs to the neurotoxin 10 (Hwtx-1) family. 51 (Hntx-8) subfamily. Hntx-8 sub-subfamily. Expressed by the venom gland.

It localises to the secreted. Its function is as follows. Ion channel inhibitor. This is U3-theraphotoxin-Hhn1a 3 from Cyriopagopus hainanus (Chinese bird spider).